The sequence spans 162 residues: Disulfide bond formation protein B (162 aa).

The Cytoplasmic segment spans residues 1–8 (MTPLFRKA). The chain crosses the membrane as a helical span at residues 9–25 (VWLLFAVSVCAFAGSLA). At 26–43 (AQYVLGMEPCVLCISQRL) the chain is on the periplasmic side. C35 and C38 are joined by a disulfide. The chain crosses the membrane as a helical span at residues 44-60 (CVLATALCTAIVLMCRP). Over 61-67 (RRRAGGL) the chain is Cytoplasmic. The chain crosses the membrane as a helical span at residues 68-85 (FGAVFISIPAVTGISVAA). Residues 86–141 (YQLWLQSLPPGTAPSCGAPWTFRLKGWPLFDWFEPVVRGFGNCAEPDYLLGIALPV) lie on the Periplasmic side of the membrane. C101 and C128 form a disulfide bridge. A helical transmembrane segment spans residues 142-160 (WSVAYFLAVVLTVWWAWAR). The Cytoplasmic segment spans residues 161–162 (AK).

The protein belongs to the DsbB family.

It localises to the cell inner membrane. Its function is as follows. Required for disulfide bond formation in some periplasmic proteins. Acts by oxidizing the DsbA protein. The chain is Disulfide bond formation protein B from Neisseria meningitidis serogroup B (strain ATCC BAA-335 / MC58).